Reading from the N-terminus, the 23-residue chain is Toxin Acra2 (23 aa).

In terms of domain architecture, LCN-type CS-alpha/beta spans 2–23; it reads KDGYIVDSNGCAPECFPTNXGC.

Contains 4 disulfide bonds. As to expression, expressed by the venom gland.

Its subcellular location is the secreted. Functionally, excitatory insect toxins induce a spastic paralysis. They bind voltage-independently at site-4 of sodium channels (Nav) and shift the voltage of activation toward more negative potentials thereby affecting sodium channel activation and promoting spontaneous and repetitive firing. Is lethal to mice. Is about 1% of the total protein in the venom. In Androctonus crassicauda (Arabian fat-tailed scorpion), this protein is Toxin Acra2.